Reading from the N-terminus, the 204-residue chain is Large ribosomal subunit protein bL17 (204 aa).

The interval 124–204 (QAVGEAERAR…DDDGPAESKS (81 aa)) is disordered. Over residues 128 to 142 (EAERARGTRFSERRK) the composition is skewed to basic and acidic residues. Over residues 156 to 191 (SESPTAAAVAAQSAEEQAPVEETLTAQAAETSAATV) the composition is skewed to low complexity. The span at 192–204 (EETDDDGPAESKS) shows a compositional bias: acidic residues.

It belongs to the bacterial ribosomal protein bL17 family. As to quaternary structure, part of the 50S ribosomal subunit. Contacts protein L32.

The chain is Large ribosomal subunit protein bL17 from Frankia alni (strain DSM 45986 / CECT 9034 / ACN14a).